The sequence spans 574 residues: Interactor of HORMAD1 protein 1 (574 aa).

The disordered stretch occupies residues 113–133 (GLSKQFEEKKRRATDQSDSET). Residues 117–127 (QFEEKKRRATD) are compositionally biased toward basic and acidic residues. The stretch at 217-240 (MEMKSTLKNLEVLVVEQTKNLQQF) forms a coiled coil. Disordered regions lie at residues 267–324 (GHLK…GVWD), 372–393 (FSNL…GASQ), and 426–457 (TEQK…DRKQ). Residues 272–284 (STSQTSPSLTQSL) show a composition bias toward low complexity. The span at 372–381 (FSNLPSQRAG) shows a compositional bias: polar residues. A compositionally biased stretch (basic residues) spans 431–449 (RPCRKRRRGKKQQPQRSKR). Residues S476, S569, and S570 each carry the phosphoserine modification.

Part of the MCD recombinosome complex, at least composed of IHO1, REC114 and MEI4. Interacts with REC114. Interacts with MEI4. Interacts with HORMAD1. Interacts with ANKRD31. As to expression, detected in spermatocytes and testis (at protein level).

The protein resides in the chromosome. Its function is as follows. Required for DNA double-strand breaks (DSBs) formation in unsynapsed regions during meiotic recombination. Probably acts by forming a complex with MEI4 and REC114, which activates DSBs formation in unsynapsed regions, an essential step to ensure completion of synapsis. Not required for HORMAD1 functions in pairing-independent synaptonemal complex formation, ATR recruitment to unsynapsed axes, meiotic silencing of unsynapsed chromatin (MSUC) or meiotic surveillance. The protein is Interactor of HORMAD1 protein 1 of Mus musculus (Mouse).